The primary structure comprises 160 residues: Transmembrane protein 191A (160 aa).

The helical transmembrane segment at 24 to 44 (FCFPLDFVSNLFWIFASKFII) threads the bilayer.

It belongs to the TMEM191 family.

It is found in the membrane. This Homo sapiens (Human) protein is Transmembrane protein 191A (TMEM191A).